We begin with the raw amino-acid sequence, 360 residues long: Magnesium-protoporphyrin IX monomethyl ester [oxidative] cyclase (360 aa).

This sequence belongs to the AcsF family. It depends on Fe cation as a cofactor.

The enzyme catalyses Mg-protoporphyrin IX 13-monomethyl ester + 3 NADPH + 3 O2 + 2 H(+) = 3,8-divinyl protochlorophyllide a + 3 NADP(+) + 5 H2O. The protein operates within porphyrin-containing compound metabolism; chlorophyll biosynthesis (light-independent). In terms of biological role, catalyzes the formation of the isocyclic ring in chlorophyll biosynthesis. Mediates the cyclase reaction, which results in the formation of divinylprotochlorophyllide (Pchlide) characteristic of all chlorophylls from magnesium-protoporphyrin IX 13-monomethyl ester (MgPMME). This chain is Magnesium-protoporphyrin IX monomethyl ester [oxidative] cyclase, found in Synechococcus sp. (strain WH7803).